Reading from the N-terminus, the 311-residue chain is Methionyl-tRNA formyltransferase (311 aa).

112-115 (SLLP) is a (6S)-5,6,7,8-tetrahydrofolate binding site.

This sequence belongs to the Fmt family.

The enzyme catalyses L-methionyl-tRNA(fMet) + (6R)-10-formyltetrahydrofolate = N-formyl-L-methionyl-tRNA(fMet) + (6S)-5,6,7,8-tetrahydrofolate + H(+). In terms of biological role, attaches a formyl group to the free amino group of methionyl-tRNA(fMet). The formyl group appears to play a dual role in the initiator identity of N-formylmethionyl-tRNA by promoting its recognition by IF2 and preventing the misappropriation of this tRNA by the elongation apparatus. The protein is Methionyl-tRNA formyltransferase of Bradyrhizobium sp. (strain ORS 278).